The following is a 375-amino-acid chain: Neuropeptide Y receptor type 4 (375 aa).

Over 1-39 (MNTSHLMASLSPAFLQGKNGTNPLDSLYNLSDGCQDSAD) the chain is Extracellular. Asn2, Asn19, and Asn29 each carry an N-linked (GlcNAc...) asparagine glycan. A helical membrane pass occupies residues 40–60 (LLAFIITTYSVETVLGVLGNL). Over 61–78 (CLIFVTTRQKEKSNVTNL) the chain is Cytoplasmic. The helical transmembrane segment at 79 to 99 (LIANLAFSDFLMCLICQPLTV) threads the bilayer. Over 100 to 116 (TYTIMDYWIFGEVLCKM) the chain is Extracellular. Cys114 and Cys201 are oxidised to a cystine. Residues 117-137 (LTFIQCMSVTVSILSLVLVAL) traverse the membrane as a helical segment. Over 138 to 155 (ERHQLIINPTGWKPSISQ) the chain is Cytoplasmic. The helical transmembrane segment at 156–176 (AYLGIVVIWFISCFLSLPFLA) threads the bilayer. At 177–211 (NSILNDLFHYNHSKVVEFLEDKVVCFVSWSSDHHR) the chain is on the extracellular side. Asn187 is a glycosylation site (N-linked (GlcNAc...) asparagine). The chain crosses the membrane as a helical span at residues 212-232 (LIYTTFLLLFQYCVPLAFILV). Topologically, residues 233–262 (CYMRIYQRLQRQRRAFHTHTCSSRVGQMKR) are cytoplasmic. The chain crosses the membrane as a helical span at residues 263–283 (INGMLMAMVTAFAVLWLPLHV). Residues 284 to 301 (FNTLEDWYQEAIPACHGN) are Extracellular-facing. A helical transmembrane segment spans residues 302–322 (LIFLMCHLFAMASTCVNPFIY). Residues 323–375 (GFLNINFKKDIKALVLTCRCRPPQGEPEPLPLSTVHTDLSKGSMRMGSKSNVM) lie on the Cytoplasmic side of the membrane. The S-palmitoyl cysteine moiety is linked to residue Cys340.

The protein belongs to the G-protein coupled receptor 1 family. As to expression, detected in colon and brain.

The protein localises to the cell membrane. G protein-coupled receptor for PPY/pancreatic polypeptide/PP that is negatively coupled to cAMP. Has much lower affinity for the NPY/neuropeptide Y and PYY/peptide YY. In Rattus norvegicus (Rat), this protein is Neuropeptide Y receptor type 4 (Npy4r).